Reading from the N-terminus, the 228-residue chain is Leucine rich adaptor protein 1-like (228 aa).

An N-acetylmethionine modification is found at Met1. A disordered region spans residues 1–89; the sequence is MEDSPLPDLR…GSPRGSHSSA (89 aa). Basic and acidic residues-rich tracts occupy residues 8-21 and 28-42; these read DLRDIELKLGRKVP and LRGEEPVPRERDRDP. Over residues 44–56 the composition is skewed to gly residues; that stretch reads GGSGGGGGGGGGC. Positions 57–88 are enriched in low complexity; sequence SSSSSYCSFPPSLSSSSSSSPTSGSPRGSHSS.

The sequence is that of Leucine rich adaptor protein 1-like (LURAP1L) from Homo sapiens (Human).